Reading from the N-terminus, the 150-residue chain is Cytochrome c oxidase subunit 5A, mitochondrial (150 aa).

A mitochondrion-targeting transit peptide spans 1-41 (MLGAALRRCAVAATARAGPRGLLHSAPTPGPAAAIQSVRCY). An SIFI-degron motif is present at residues 2 to 17 (LGAALRRCAVAATARA). N6-acetyllysine occurs at positions 87 and 113. The residue at position 141 (Thr141) is a Phosphothreonine.

It belongs to the cytochrome c oxidase subunit 5A family. In terms of assembly, component of the cytochrome c oxidase (complex IV, CIV), a multisubunit enzyme composed of 14 subunits. The complex is composed of a catalytic core of 3 subunits MT-CO1, MT-CO2 and MT-CO3, encoded in the mitochondrial DNA, and 11 supernumerary subunits COX4I, COX5A, COX5B, COX6A, COX6B, COX6C, COX7A, COX7B, COX7C, COX8 and NDUFA4, which are encoded in the nuclear genome. The complex exists as a monomer or a dimer and forms supercomplexes (SCs) in the inner mitochondrial membrane with NADH-ubiquinone oxidoreductase (complex I, CI) and ubiquinol-cytochrome c oxidoreductase (cytochrome b-c1 complex, complex III, CIII), resulting in different assemblies (supercomplex SCI(1)III(2)IV(1) and megacomplex MCI(2)III(2)IV(2)). Interacts with AFG1L. Interacts with RAB5IF. In response to mitochondrial stress, the precursor protein is ubiquitinated by the SIFI complex in the cytoplasm before mitochondrial import, leading to its degradation. Within the SIFI complex, UBR4 initiates ubiquitin chain that are further elongated or branched by KCMF1.

The protein resides in the mitochondrion inner membrane. The protein operates within energy metabolism; oxidative phosphorylation. Functionally, component of the cytochrome c oxidase, the last enzyme in the mitochondrial electron transport chain which drives oxidative phosphorylation. The respiratory chain contains 3 multisubunit complexes succinate dehydrogenase (complex II, CII), ubiquinol-cytochrome c oxidoreductase (cytochrome b-c1 complex, complex III, CIII) and cytochrome c oxidase (complex IV, CIV), that cooperate to transfer electrons derived from NADH and succinate to molecular oxygen, creating an electrochemical gradient over the inner membrane that drives transmembrane transport and the ATP synthase. Cytochrome c oxidase is the component of the respiratory chain that catalyzes the reduction of oxygen to water. Electrons originating from reduced cytochrome c in the intermembrane space (IMS) are transferred via the dinuclear copper A center (CU(A)) of subunit 2 and heme A of subunit 1 to the active site in subunit 1, a binuclear center (BNC) formed by heme A3 and copper B (CU(B)). The BNC reduces molecular oxygen to 2 water molecules using 4 electrons from cytochrome c in the IMS and 4 protons from the mitochondrial matrix. This Cebuella pygmaea (Pygmy marmoset) protein is Cytochrome c oxidase subunit 5A, mitochondrial (COX5A).